The primary structure comprises 1640 residues: Basal body protein 10 (1640 aa).

Residues 11 to 64 (VLRRKLEALGYSDPLEPASLQLVQKLVEDLVHTTDSYTAVKQQCAKQAQEIAAF) form a homodimerization region. Residues 93 to 148 (AERHEREAREHYTAVKRLEDTIAELSYWKHAAAEKLASADKENAGLRKRCEELAKL) are a coiled coil. Residues 154–185 (SGAATPQSVAPKISSRSPIRVAPPPSPPRPRQ) form a disordered region. Positions 174-183 (VAPPPSPPRP) are enriched in pro residues. Coiled-coil stretches lie at residues 191 to 232 (LQAA…RDVE), 260 to 332 (ILQL…LQDT), 370 to 411 (VERL…AQSR), 461 to 722 (FAAL…AEAD), 758 to 960 (ARQM…AQAA), 1010 to 1030 (GEAL…LVRE), 1059 to 1086 (RASA…LAAE), 1129 to 1282 (INQY…LQAS), 1323 to 1494 (AKDQ…AERD), and 1523 to 1557 (AELA…TRAT). Residues 1592–1618 (GQGQVQGPAGTAPAAAAGAPGPQPGQA) show a composition bias toward low complexity. Positions 1592 to 1640 (GQGQVQGPAGTAPAAAAGAPGPQPGQAQAGGFGGAHGGGSISLSGGPRR) are disordered. Residues 1619–1631 (QAGGFGGAHGGGS) are compositionally biased toward gly residues.

The protein belongs to the CEP135/TSGA10 family. Homodimer.

The protein localises to the cytoplasm. It localises to the cytoskeleton. The protein resides in the microtubule organizing center. Its subcellular location is the centrosome. It is found in the centriole. Its function is as follows. Microtubule-binding protein essential for cytoskeletal organization (e.g. rootlet microtubule bundles) and flagellar basal body/centriole assembly. In Chlamydomonas reinhardtii (Chlamydomonas smithii), this protein is Basal body protein 10.